We begin with the raw amino-acid sequence, 98 residues long: Glutaredoxin 1 (98 aa).

In terms of domain architecture, Glutaredoxin spans 1–98 (MNKAILHAII…KLLEGQPKKD (98 aa)). A disulfide bridge links Cys17 with Cys20.

The protein belongs to the glutaredoxin family. In terms of assembly, monomer.

It localises to the cytoplasm. In terms of biological role, has a glutathione-disulfide oxidoreductase activity in the presence of NADPH and glutathione reductase. Reduces low molecular weight disulfides and proteins. The chain is Glutaredoxin 1 (grxC1) from Rickettsia bellii (strain RML369-C).